Consider the following 281-residue polypeptide: Putative glutamine amidotransferase-like protein RP404 (281 aa).

A Glutamine amidotransferase type-1 domain is found at 19–281 (KYTYADFPWY…KALVKASKYI (263 aa)). Positions 139–174 (RHFSKLTYSKKFECNTEAFATTVYTLPIKLEFENAP) constitute an RPE1 insert domain.

The polypeptide is Putative glutamine amidotransferase-like protein RP404 (Rickettsia prowazekii (strain Madrid E)).